A 93-amino-acid polypeptide reads, in one-letter code: Large ribosomal subunit protein uL23 (93 aa).

It belongs to the universal ribosomal protein uL23 family. In terms of assembly, part of the 50S ribosomal subunit. Contacts protein L29, and trigger factor when it is bound to the ribosome.

Its function is as follows. One of the early assembly proteins it binds 23S rRNA. One of the proteins that surrounds the polypeptide exit tunnel on the outside of the ribosome. Forms the main docking site for trigger factor binding to the ribosome. The protein is Large ribosomal subunit protein uL23 of Nitratiruptor sp. (strain SB155-2).